We begin with the raw amino-acid sequence, 379 residues long: MASDWRRQSTSRGIPNEGQNDEKGKPLIGRSFLLEIENRILRTNVAEGLHISGATIIDSFDDASPQCVISDHPMAQKLEKAKKDDPLFKNEKMLKIMPALLRQAVNRNIKVRTPERFLNQMNTWLDRQGKTTSATTSNSTIRGKPSFGRENSAKIERTTPRLVPRMPRVSSDQTSSRPKEERCFLRIDVPGKRPEIRNVSKESFSIVYSGRDTGFSIFKAAESSLVERRQREYDSFLKGKYEPSKKTFKFDERDNYCQFCQKTILGDRKDHERTDEHRNKARTQGITQTMERIVLNARLRAERQEAALKRNQRKSRESVMFVEKSKRANVEYEYGENEIKANWLMLKANTVEKTTEKTSILSPRRRQKRMRSLSSQGDI.

Disordered regions lie at residues 1 to 25 (MASDWRRQSTSRGIPNEGQNDEKGK), 128 to 158 (QGKTTSATTSNSTIRGKPSFGRENSAKIERT), and 355 to 379 (TEKTSILSPRRRQKRMRSLSSQGDI). Residues 128-141 (QGKTTSATTSNSTI) show a composition bias toward polar residues.

This is an uncharacterized protein from Caenorhabditis elegans.